The following is a 621-amino-acid chain: E3 SUMO-protein ligase PIAS2 (621 aa).

In terms of domain architecture, SAP spans 11–45; that stretch reads VSSFRVSELQVLLGFAGRNKSGRKHDLLMRALHLL. Positions 19-23 match the LXXLL motif motif; it reads LQVLL. Glycyl lysine isopeptide (Lys-Gly) (interchain with G-Cter in SUMO2) cross-links involve residues Lys46 and Lys249. Residues 134–299 form the PINIT domain; that stretch reads QPSPPIPPVH…SMSVYLVRQL (166 aa). The SP-RING-type zinc-finger motif lies at 331 to 412; that stretch reads PDSEIATTSL…FMEILNDCSD (82 aa). Residues Cys362, His364, Cys385, and Cys388 each coordinate Zn(2+). Residues Lys430, Lys435, Lys443, and Lys452 each participate in a glycyl lysine isopeptide (Lys-Gly) (interchain with G-Cter in SUMO2) cross-link. An SUMO1-binding region spans residues 467-473; it reads IDVIDLT. A phosphoserine mark is found at Ser476, Ser477, and Ser478. Residues 484–492 carry the Nuclear localization signal motif; the sequence is PPAKRKCIF. Lys489 participates in a covalent cross-link: Glycyl lysine isopeptide (Lys-Gly) (interchain with G-Cter in SUMO2). The residue at position 499 (Ser499) is a Phosphoserine. Residue Lys502 forms a Glycyl lysine isopeptide (Lys-Gly) (interchain with G-Cter in SUMO2) linkage. Over residues 577–610 the composition is skewed to low complexity; it reads TASSTSVTTTSPHESSTHVSSSSSRSETGVITSS. The segment at 577-621 is disordered; that stretch reads TASSTSVTTTSPHESSTHVSSSSSRSETGVITSSGRNIPDIISLD.

The protein belongs to the PIAS family. As to quaternary structure, binds SUMO1 and UBE2I. Interacts with AXIN1, JUN, MDM2, PARK7, TP53 and TP73 isoform alpha, but not TP73 isoform beta. Interacts with STAT4 following IL12 and IFN-alpha stimulation of T-cells. Interacts also with GTF2I, GTF2IRD1, IKFZ1, DAB2 and MSX2, as well as with several steroid receptors, including ESR1, ESR2, NR3C1, PGR, AR, and with NCOA2. Sumoylation of a target protein seems to enhance the interaction. Binds to sumoylated ELK1. Interacts with PLAG1. Binds DNA, such as CDKN1A promoter, in a sequence-specific manner. Interacts with KLF8; the interaction results in SUMO ligation and repression of KLF8 transcriptional activity and of its cell cycle progression into G(1) phase. Interacts with IFIH1/MDA5. Interacts with PML. Interacts with PRDM1. Sumoylated.

The protein localises to the nucleus speckle. It is found in the nucleus. It localises to the PML body. It catalyses the reaction S-ubiquitinyl-[E2 ubiquitin-conjugating enzyme]-L-cysteine + [acceptor protein]-L-lysine = [E2 ubiquitin-conjugating enzyme]-L-cysteine + N(6)-ubiquitinyl-[acceptor protein]-L-lysine.. It participates in protein modification; protein sumoylation. In terms of biological role, functions as an E3-type small ubiquitin-like modifier (SUMO) ligase, stabilizing the interaction between UBE2I and the substrate, and as a SUMO-tethering factor. Plays a crucial role as a transcriptional coregulation in various cellular pathways, including the STAT pathway, the p53 pathway and the steroid hormone signaling pathway. The effects of this transcriptional coregulation, transactivation or silencing may vary depending upon the biological context and PIAS2 isoform studied. However, it seems to be mostly involved in gene silencing. Binds to sumoylated ELK1 and enhances its transcriptional activity by preventing recruitment of HDAC2 by ELK1, thus reversing SUMO-mediated repression of ELK1 transactivation activity. Isoform PIASx-beta, but not isoform PIASx-alpha, promotes MDM2 sumoylation. Isoform PIASx-alpha promotes PARK7 sumoylation. Isoform PIASx-beta promotes NCOA2 sumoylation more efficiently than isoform PIASx-alpha. Sumoylates PML at'Lys-65' and 'Lys-160'. This Mus musculus (Mouse) protein is E3 SUMO-protein ligase PIAS2 (Pias2).